The chain runs to 210 residues: Guanylate kinase (210 aa).

The 179-residue stretch at glycine 6 to arginine 184 folds into the Guanylate kinase-like domain. Alanine 13–threonine 20 is a binding site for ATP.

The protein belongs to the guanylate kinase family.

Its subcellular location is the cytoplasm. It catalyses the reaction GMP + ATP = GDP + ADP. Its function is as follows. Essential for recycling GMP and indirectly, cGMP. The sequence is that of Guanylate kinase from Chromobacterium violaceum (strain ATCC 12472 / DSM 30191 / JCM 1249 / CCUG 213 / NBRC 12614 / NCIMB 9131 / NCTC 9757 / MK).